Here is a 265-residue protein sequence, read N- to C-terminus: Zearalenone hydrolase (265 aa).

Residues Gly35, Ser105, and Ser106 each coordinate zearalenone. The active site involves Ser105. Residue Glu129 is part of the active site. Zearalenone is bound by residues Trp185, Tyr189, and His243. The active site involves His243.

The protein belongs to the AB hydrolase superfamily. Hydrolase RutD family. In terms of assembly, homodimer.

It carries out the reaction zearalenone + H2O = hydrolyzed zearalenone + H(+). Lactonohydrolase that specifically hydrolyzes zearalenone (ZEN), an oestrogenic mycotoxin produced by numerous Fusarium specie, into a non-toxic alkylresorcinol product. The polypeptide is Zearalenone hydrolase (Cladophialophora bantiana (strain ATCC 10958 / CDC1940 / 8579 / CBS 173.52) (Xylohypha bantiana)).